A 186-amino-acid polypeptide reads, in one-letter code: Ribosome-recycling factor (186 aa).

Belongs to the RRF family.

It localises to the cytoplasm. In terms of biological role, responsible for the release of ribosomes from messenger RNA at the termination of protein biosynthesis. May increase the efficiency of translation by recycling ribosomes from one round of translation to another. This is Ribosome-recycling factor from Chlorobium phaeobacteroides (strain DSM 266 / SMG 266 / 2430).